Here is an 832-residue protein sequence, read N- to C-terminus: Sodium/hydrogen exchanger 3 (832 aa).

A signal peptide spans 1 to 29 (MSGRGGCGPCWGLLLALVLALGALPWTQG). Residues 30–50 (AEQEHHDEIQGFQIVTFKWHH) lie on the Extracellular side of the membrane. A helical transmembrane segment spans residues 51 to 73 (VQDPYIIALWVLVASLAKIVFHL). The Cytoplasmic portion of the chain corresponds to 74-81 (SHKVTSVV). Residues 82-101 (PESALLIVLGLVLGGIVLAA) traverse the membrane as a helical segment. Topologically, residues 102 to 110 (DHIASFTLT) are extracellular. Residues 111-128 (PTVFFFYLLPPIVLDAGY) traverse the membrane as a helical segment. Over 129-131 (FMP) the chain is Cytoplasmic. Residues 132 to 167 (NRLFFSNLGSILLYAVVGTVWNAATTGLSLYGVFLS) form a helical membrane-spanning segment. A 1,2-diacyl-sn-glycero-3-phospho-(1D-myo-inositol) is bound by residues Gly-140 and Ser-141. The Extracellular portion of the chain corresponds to 168–180 (GIMGELKIGLLDF). A helical membrane pass occupies residues 181–202 (LLFGSLIAAVDPVAVLAVFEEV). Topologically, residues 203–204 (HV) are cytoplasmic. A helical transmembrane segment spans residues 205-236 (NEVLFIIVFGESLLNDAVTVVLYNVFQSFVTL). Over 237–243 (GGDKVTG) the chain is Extracellular. A helical membrane pass occupies residues 244-278 (VDCVKGIVSFFVVSLGGTLVGVVFAFLLSLVTRFT). Residues 279 to 280 (KH) are Cytoplasmic-facing. The chain crosses the membrane as a helical span at residues 281–303 (VRVIEPGFVFIISYLSYLTSEML). At 304-305 (SL) the chain is on the extracellular side. The helical transmembrane segment at 306-322 (SSILAITFCGICCQKYV) threads the bilayer. The Cytoplasmic portion of the chain corresponds to 323–329 (KANISEQ). A helical transmembrane segment spans residues 330 to 358 (SATTVRYTMKMLASGAETIIFMFLGISAV). Residues 359 to 366 (DPLIWTWN) are Extracellular-facing. The chain crosses the membrane as a helical span at residues 367-388 (TAFVLLTLLFVSVFRAIGVVLQ). The Cytoplasmic portion of the chain corresponds to 389–401 (TWLLNRYRMVQLE). Met-397 lines the a 1,2-diacyl-sn-glycero-3-phospho-(1D-myo-inositol) pocket. The chain crosses the membrane as a helical span at residues 402–425 (LIDQVVMSYGGLRGAVAFALVALL). The Extracellular portion of the chain corresponds to 426-432 (DGNKVKE). A helical membrane pass occupies residues 433 to 466 (KNLFVSTTIIVVFFTVIFQGLTIKPLVQWLKVKR). The Cytoplasmic segment spans residues 467-832 (SEHREPKLNE…GAEHPESTHM (366 aa)). A 1,2-diacyl-sn-glycero-3-phospho-(1D-myo-inositol) is bound by residues Gln-496, Ile-497, and His-499. Residues Ser-554 and Ser-562 each carry the phosphoserine modification. Positions 575–589 (RPSTVEASVSYLLRE) are interaction with EZR. Residues 590-667 (SASAVCLDMQ…RKRLESFKSA (78 aa)) are interaction with NHERF4. The interval 591 to 696 (ASAVCLDMQS…AQKRRNSSVP (106 aa)) is interaction with AHCYL1. Ser-592 and Ser-607 each carry phosphoserine. Ser-663 is subject to Phosphoserine; by SGK1. The tract at residues 664-706 (FKSAKLGLGQSKKATKHKRERERAQKRRNSSVPNGKLPLDSPA) is disordered. Positions 676–692 (KATKHKRERERAQKRRN) are enriched in basic residues. Phosphoserine occurs at positions 719, 813, and 816.

Belongs to the monovalent cation:proton antiporter 1 (CPA1) transporter (TC 2.A.36) family. As to quaternary structure, homodimer. Found in the forms of complex and dynamic macromolecular complexes. Interacts with CHP1; this interaction increases trafficking and activity at the plasma membrane of SLC9A3. Interacts with CHP2 and SHANK2. Interacts with NHERF4 and interaction decreases in response to elevated calcium ion levels. Binds NHERF1 and NHERF2. Interacts with PDZK1 (via C-terminal PDZ domain). Interacts with AHCYL1; interaction is required for SLC9A3 activity. Interacts with EZR; interaction targets SLC9A3 to the apical membrane. Interacts with SNX27 (via PDZ domains); directs SLC9A3 membrane insertion from early endosomes to the plasma membrane. In terms of processing, phosphorylated by PKA, which inhibits activity. Phosphorylation at Ser-663 by SGK1 is associated with increased abundance at the cell membrane and activity. Phosphorylation at Ser-719 by CSNK2A1 regulates SLC9A3 activity through the formation of multiple signaling complexes. In terms of tissue distribution, intestinal and kidney specific. Most abundant in kidney cortex, followed equally by ileum and ascending colon, then kidney medulla and jejunum. Is absent from duodenum and descending colon.

It localises to the apical cell membrane. The protein localises to the cell membrane. Its subcellular location is the recycling endosome membrane. The protein resides in the early endosome membrane. The enzyme catalyses Na(+)(in) + H(+)(out) = Na(+)(out) + H(+)(in). Its activity is regulated as follows. Seems to switch between active and inactive modes in response to various stimuli. Activated directly or indirectly by membrane phosphatidylinositol (PIs). Regulated by a variety of auxiliary proteins, which facilitate the maturation, cell surface expression and function of the transporter. Inhibited specifically by the drug tenapanor. Functionally, plasma membrane Na(+)/H(+) antiporter. Exchanges intracellular H(+) ions for extracellular Na(+) in 1:1 stoichiometry, playing a key role in salt and fluid absorption and pH homeostasis. Major apical Na(+)/H(+) exchanger in kidney and intestine playing an important role in renal and intestine Na(+) absorption and blood pressure regulation. This is Sodium/hydrogen exchanger 3 (SLC9A3) from Oryctolagus cuniculus (Rabbit).